Reading from the N-terminus, the 360-residue chain is Dual-specificity RNA methyltransferase RlmN (360 aa).

Glu-91 acts as the Proton acceptor in catalysis. A Radical SAM core domain is found at 110–343; the sequence is RSEKYTVCIS…CTIRESKGLD (234 aa). Residues Cys-117 and Cys-348 are joined by a disulfide bond. [4Fe-4S] cluster contacts are provided by Cys-124, Cys-128, and Cys-131. Residues 174 to 175, Ser-206, 229 to 231, and Asn-305 contribute to the S-adenosyl-L-methionine site; these read GE and SLH. The active-site S-methylcysteine intermediate is Cys-348.

Belongs to the radical SAM superfamily. RlmN family. Requires [4Fe-4S] cluster as cofactor.

The protein localises to the cytoplasm. It catalyses the reaction adenosine(2503) in 23S rRNA + 2 reduced [2Fe-2S]-[ferredoxin] + 2 S-adenosyl-L-methionine = 2-methyladenosine(2503) in 23S rRNA + 5'-deoxyadenosine + L-methionine + 2 oxidized [2Fe-2S]-[ferredoxin] + S-adenosyl-L-homocysteine. The enzyme catalyses adenosine(37) in tRNA + 2 reduced [2Fe-2S]-[ferredoxin] + 2 S-adenosyl-L-methionine = 2-methyladenosine(37) in tRNA + 5'-deoxyadenosine + L-methionine + 2 oxidized [2Fe-2S]-[ferredoxin] + S-adenosyl-L-homocysteine. In terms of biological role, specifically methylates position 2 of adenine 2503 in 23S rRNA and position 2 of adenine 37 in tRNAs. m2A2503 modification seems to play a crucial role in the proofreading step occurring at the peptidyl transferase center and thus would serve to optimize ribosomal fidelity. This Aliarcobacter butzleri (strain RM4018) (Arcobacter butzleri) protein is Dual-specificity RNA methyltransferase RlmN.